A 117-amino-acid polypeptide reads, in one-letter code: Large ribosomal subunit protein uL22 (117 aa).

The protein belongs to the universal ribosomal protein uL22 family. As to quaternary structure, part of the 50S ribosomal subunit.

This protein binds specifically to 23S rRNA; its binding is stimulated by other ribosomal proteins, e.g. L4, L17, and L20. It is important during the early stages of 50S assembly. It makes multiple contacts with different domains of the 23S rRNA in the assembled 50S subunit and ribosome. Functionally, the globular domain of the protein is located near the polypeptide exit tunnel on the outside of the subunit, while an extended beta-hairpin is found that lines the wall of the exit tunnel in the center of the 70S ribosome. The chain is Large ribosomal subunit protein uL22 from Synechococcus elongatus (strain ATCC 33912 / PCC 7942 / FACHB-805) (Anacystis nidulans R2).